The primary structure comprises 511 residues: DELLA protein RGL1 (511 aa).

The segment covering 1–11 (MKREHNHRESS) has biased composition (basic and acidic residues). The interval 1–20 (MKREHNHRESSAGEGGSSSM) is disordered. The DELLA motif motif lies at 32–36 (DELLV). The LEXLE motif signature appears at 54–58 (LEQLE). The VHYNP motif signature appears at 73 to 77 (VHYNP). The region spanning 143–506 (LDSQETGVRL…RPLIATSAWR (364 aa)) is the GRAS domain. The segment at 150–204 (VRLVHALLACAEAVQQNNLKLADALVKHVGLLASSQAGAMRKVATYFAEGLARRI) is leucine repeat I (LRI). The LxCxE motif signature appears at 157 to 161 (LACAE). Positions 223-288 (QIHFYESCPY…NGPPDFRLTG (66 aa)) are VHIID. The short motif at 254–258 (VHVID) is the VHIID element. Residues 298–330 (EVGWKLGQLASTIGVNFEFKSIALNNLSDLKPE) are leucine repeat II (LRII). The PFYRE stretch occupies residues 341–427 (VAVNSVFELH…ELFLGRQILN (87 aa)). The short motif at 349-353 (LHRLL) is the LXXLL motif element. Positions 430–506 (ACEGEDRVER…RPLIATSAWR (77 aa)) are SAW.

The protein belongs to the GRAS family. DELLA subfamily. Interacts directly with the GID2/SLY1 component of the SCF(GID2) complex. Interacts (via N-terminus) with GID1A, GID1B and GID1B (via N-terminus). Interacts with the BOI proteins BOI, BRG1, BRG2 and BRG3. Binds to and coactivates GAF1/IDD2 and ENY/IDD1. Post-translationally, phosphorylated. In terms of processing, may be ubiquitinated, as suggested by its interaction with GID2. Ubiquitination is however unsure since in contrast to other DELLA proteins, it is not ubiquitinated and degraded upon GA application. Nevertheless, ubiquitination may be triggered by other processes. In terms of tissue distribution, predominantly expressed in germinating seeds and flowers and siliques. Highly expressed in inflorescences and weakly or not expressed in rosette leaves, etiolated seedlings, siliques, mature stems and roots. RGA and GAI transcripts were detected at slightly varying levels in all tissues examined. RGL2 signal was undetected, and RGL3 signal was very weak in all tissues examined (rosette leaves, seedlings, inflorescences, and siliques) except inflorescences. In the flower, it is expressed in developing ovules as well as in developing anthers throughout microspore development.

It localises to the nucleus. In terms of biological role, probable transcriptional regulator that acts as a repressor of the gibberellin (GA) signaling pathway. No effect of the BOI proteins on its stability. Probably acts by participating in large multiprotein complexes that repress transcription of GA-inducible genes. Has overlapping but distinct roles in GA signaling compared to RGA and GAI. Regulates the floral development. May also participate in seed germination and in ovule and anther development. Its activity is probably regulated by other phytohormones such as auxin and ethylene. This Arabidopsis thaliana (Mouse-ear cress) protein is DELLA protein RGL1 (RGL1).